The sequence spans 569 residues: Cryptochrome DASH, chloroplastic/mitochondrial (569 aa).

The region spanning 84 to 221 (GVTILWFRND…KLELIWGSTM (138 aa)) is the Photolyase/cryptochrome alpha/beta domain. FAD contacts are provided by residues Y316 and 329–333 (STKFS). An ATP-binding site is contributed by R436. FAD is bound by residues D466 and D468. D485 serves as a coordination point for ATP. The tract at residues 541 to 569 (GNGPMAGGSKSGGGFRGSHSGRRSRHNGP) is disordered. The segment covering 544-556 (PMAGGSKSGGGFR) has biased composition (gly residues). Residues 559–569 (HSGRRSRHNGP) are compositionally biased toward basic residues.

Belongs to the DNA photolyase class-1 family. Homodimer. It depends on FAD as a cofactor. (6R)-5,10-methylene-5,6,7,8-tetrahydrofolate is required as a cofactor.

It is found in the plastid. The protein localises to the chloroplast. The protein resides in the mitochondrion. In terms of biological role, may have a photoreceptor function. Binds ss- and ds-DNA in a sequence non-specific manner. Has a photolyase activity specific for cyclobutane pyrimidine dimers in ssDNA. This Arabidopsis thaliana (Mouse-ear cress) protein is Cryptochrome DASH, chloroplastic/mitochondrial (CRYD).